The primary structure comprises 62 residues: Small ribosomal subunit protein uS14 (62 aa).

Zn(2+) contacts are provided by C25, C28, C41, and C44.

This sequence belongs to the universal ribosomal protein uS14 family. Zinc-binding uS14 subfamily. As to quaternary structure, part of the 30S ribosomal subunit. Contacts proteins S3 and S10. Zn(2+) serves as cofactor.

In terms of biological role, binds 16S rRNA, required for the assembly of 30S particles and may also be responsible for determining the conformation of the 16S rRNA at the A site. In Aquifex aeolicus (strain VF5), this protein is Small ribosomal subunit protein uS14.